A 691-amino-acid chain; its full sequence is Elongation factor G (691 aa).

The tr-type G domain maps to 8–283 (EDYRNFGIMA…AVVDFLPSPI (276 aa)). GTP contacts are provided by residues 17–24 (AHIDAGKT), 81–85 (DTPGH), and 135–138 (NKMD).

It belongs to the TRAFAC class translation factor GTPase superfamily. Classic translation factor GTPase family. EF-G/EF-2 subfamily.

Its subcellular location is the cytoplasm. Functionally, catalyzes the GTP-dependent ribosomal translocation step during translation elongation. During this step, the ribosome changes from the pre-translocational (PRE) to the post-translocational (POST) state as the newly formed A-site-bound peptidyl-tRNA and P-site-bound deacylated tRNA move to the P and E sites, respectively. Catalyzes the coordinated movement of the two tRNA molecules, the mRNA and conformational changes in the ribosome. In Xanthobacter autotrophicus (strain ATCC BAA-1158 / Py2), this protein is Elongation factor G.